The chain runs to 90 residues: MKTAIFTVVLALAVFAVLSFGWEANEKALSEGFTELIHEKEAASETEARECRYFWGECHDHMPCCDWLVCRYKWPITYNICVWNRTFPEK.

The N-terminal stretch at 1 to 19 (MKTAIFTVVLALAVFAVLS) is a signal peptide. A propeptide spanning residues 20–50 (FGWEANEKALSEGFTELIHEKEAASETEARE) is cleaved from the precursor. 3 cysteine pairs are disulfide-bonded: Cys-51–Cys-65, Cys-58–Cys-70, and Cys-64–Cys-81.

This sequence belongs to the neurotoxin 10 (Hwtx-1) family. 13 (Hntx-13) subfamily. As to expression, expressed by the venom gland.

It is found in the secreted. Ion channel inhibitor. The chain is U7-theraphotoxin-Hhn1a 7 from Cyriopagopus hainanus (Chinese bird spider).